Reading from the N-terminus, the 166-residue chain is MTKQETVKHLVGVLSDAQAIVFTEYRGLSAAQLRALRILLRGDASYLIAKNTLARIAAQQVGFNDFAEFLRGPTAIVAVDGDIVSVAKSLRKFAETDGLLKIKGCFVDGQVFGSEHVKRLAELESREVILAKIASVTKGALSSALGLVSAPLSSAARVFVAMKNTF.

It belongs to the universal ribosomal protein uL10 family. As to quaternary structure, part of the ribosomal stalk of the 50S ribosomal subunit. The N-terminus interacts with L11 and the large rRNA to form the base of the stalk. The C-terminus forms an elongated spine to which L12 dimers bind in a sequential fashion forming a multimeric L10(L12)X complex.

In terms of biological role, forms part of the ribosomal stalk, playing a central role in the interaction of the ribosome with GTP-bound translation factors. This chain is Large ribosomal subunit protein uL10, found in Tropheryma whipplei (strain TW08/27) (Whipple's bacillus).